The sequence spans 446 residues: Maturase K (446 aa).

The protein belongs to the intron maturase 2 family. MatK subfamily.

The protein localises to the plastid. The protein resides in the chloroplast. In terms of biological role, usually encoded in the trnK tRNA gene intron. Probably assists in splicing its own and other chloroplast group II introns. This is Maturase K from Phalaenopsis aphrodite subsp. formosana (Moth orchid).